A 434-amino-acid chain; its full sequence is Anaerobic glycerol-3-phosphate dehydrogenase subunit B (434 aa).

This sequence belongs to the anaerobic G-3-P dehydrogenase subunit B family. In terms of assembly, composed of a catalytic GlpA/B dimer and of membrane bound GlpC. The cofactor is FMN.

The catalysed reaction is a quinone + sn-glycerol 3-phosphate = dihydroxyacetone phosphate + a quinol. It functions in the pathway polyol metabolism; glycerol degradation via glycerol kinase pathway; glycerone phosphate from sn-glycerol 3-phosphate (anaerobic route): step 1/1. Conversion of glycerol 3-phosphate to dihydroxyacetone. Uses fumarate or nitrate as electron acceptor. The protein is Anaerobic glycerol-3-phosphate dehydrogenase subunit B of Histophilus somni (strain 2336) (Haemophilus somnus).